Consider the following 227-residue polypeptide: 2,3-bisphosphoglycerate-dependent phosphoglycerate mutase (227 aa).

Substrate contacts are provided by residues 8-15 (RHGKSVWN), 21-22 (TG), arginine 58, 110-113 (ERMY), lysine 121, 137-138 (RR), and 181-182 (GN). Histidine 9 serves as the catalytic Tele-phosphohistidine intermediate. Glutamate 110 acts as the Proton donor/acceptor in catalysis.

It belongs to the phosphoglycerate mutase family. BPG-dependent PGAM subfamily.

It carries out the reaction (2R)-2-phosphoglycerate = (2R)-3-phosphoglycerate. Its pathway is carbohydrate degradation; glycolysis; pyruvate from D-glyceraldehyde 3-phosphate: step 3/5. Its function is as follows. Catalyzes the interconversion of 2-phosphoglycerate and 3-phosphoglycerate. This is 2,3-bisphosphoglycerate-dependent phosphoglycerate mutase from Chlamydia caviae (strain ATCC VR-813 / DSM 19441 / 03DC25 / GPIC) (Chlamydophila caviae).